Reading from the N-terminus, the 542-residue chain is Sensor protein CitS (542 aa).

Residues 1–13 (MVKKRFHFSLQTK) lie on the Cytoplasmic side of the membrane. Residues 14-34 (IMGLIAALLVFVIGVLTITLA) form a helical membrane-spanning segment. Topologically, residues 35 to 175 (VQHTQGERRQ…TEQSIKKHLR (141 aa)) are extracellular. A helical transmembrane segment spans residues 176–196 (NLSVIAVLVLLLGFIGAAVLA). Residues 197–542 (KSIRKDTLGL…PFDSHRDCGG (346 aa)) are Cytoplasmic-facing. The 64-residue stretch at 216–279 (RERNAMLFAI…MSVLEKGEML (64 aa)) folds into the PAS domain. A Histidine kinase domain is found at 336 to 528 (AQTHEFSNKL…VFTVFIPKEK (193 aa)). Residue His-339 is modified to Phosphohistidine; by autocatalysis.

Its subcellular location is the cell membrane. It catalyses the reaction ATP + protein L-histidine = ADP + protein N-phospho-L-histidine.. Its function is as follows. Member of the two-component regulatory system CitT/CitS. Regulates the expression of the citM-yflN operon. Functions probably as a membrane-associated protein kinase that phosphorylates CitT in response to environmental citrate or Mg(2+)-citrate complex. The chain is Sensor protein CitS (citS) from Bacillus subtilis (strain 168).